Consider the following 404-residue polypeptide: Cytoplasmic tRNA 2-thiolation protein 2 (404 aa).

This sequence belongs to the CTU2/NCS2 family.

It localises to the cytoplasm. Its pathway is tRNA modification; 5-methoxycarbonylmethyl-2-thiouridine-tRNA biosynthesis. Functionally, plays a central role in 2-thiolation of mcm(5)S(2)U at tRNA wobble positions of tRNA(Lys), tRNA(Glu) and tRNA(Gln). May act by forming a heterodimer with NCS6/CTU1 that ligates sulfur from thiocarboxylated URM1 onto the uridine of tRNAs at wobble position. The protein is Cytoplasmic tRNA 2-thiolation protein 2 of Drosophila mojavensis (Fruit fly).